A 227-amino-acid polypeptide reads, in one-letter code: Protein Saci_0792 (227 aa).

The AMMECR1 domain maps to 15 to 209 (DIGKQLIKIA…EINKNTDEII (195 aa)).

The polypeptide is Protein Saci_0792 (Sulfolobus acidocaldarius (strain ATCC 33909 / DSM 639 / JCM 8929 / NBRC 15157 / NCIMB 11770)).